We begin with the raw amino-acid sequence, 276 residues long: Large ribosomal subunit protein uL2c (276 aa).

The tract at residues 223-254 is disordered; sequence VVKNPIDHPHGGGEGRSPIGRAKPVTPWGQPA.

It belongs to the universal ribosomal protein uL2 family. In terms of assembly, part of the 50S ribosomal subunit.

The protein resides in the plastid. It is found in the chloroplast. The sequence is that of Large ribosomal subunit protein uL2c (rpl2) from Emiliania huxleyi (Coccolithophore).